The following is a 154-amino-acid chain: MHCPFCGANDTKVIDSRLVAEGEQVRRRRECVACGERFTTFETAELVLPRLIKQDGTRQPFDEEKLRAGMQRALEKRPVSVERLEAALAHIKSRLRATGEREVKSLVVGEMVMAELRKLDEVAYIRFASVYRRFQDLDEFREEIDRLAREPAKE.

A zinc finger spans residues 3–34 (CPFCGANDTKVIDSRLVAEGEQVRRRRECVAC). An ATP-cone domain is found at 49–139 (PRLIKQDGTR…VYRRFQDLDE (91 aa)).

This sequence belongs to the NrdR family. Requires Zn(2+) as cofactor.

Negatively regulates transcription of bacterial ribonucleotide reductase nrd genes and operons by binding to NrdR-boxes. The protein is Transcriptional repressor NrdR of Pseudomonas putida (strain ATCC 700007 / DSM 6899 / JCM 31910 / BCRC 17059 / LMG 24140 / F1).